Here is a 902-residue protein sequence, read N- to C-terminus: DNA mismatch repair protein MutS (902 aa).

647–654 is a binding site for ATP; the sequence is GPNMGGKS.

It belongs to the DNA mismatch repair MutS family.

In terms of biological role, this protein is involved in the repair of mismatches in DNA. It is possible that it carries out the mismatch recognition step. This protein has a weak ATPase activity. This chain is DNA mismatch repair protein MutS, found in Nitrosospira multiformis (strain ATCC 25196 / NCIMB 11849 / C 71).